A 200-amino-acid chain; its full sequence is UPF0316 protein SACOL1973 (200 aa).

3 helical membrane-spanning segments follow: residues 8-28 (PWLMVLTIFIINVCYVTFLTM), 40-60 (IAASVSFLEVLVYIVGLGLVM), and 66-86 (IQNIIAYAFGFSIGIIVGMKI).

Belongs to the UPF0316 family.

It is found in the cell membrane. In Staphylococcus aureus (strain COL), this protein is UPF0316 protein SACOL1973.